We begin with the raw amino-acid sequence, 51 residues long: Large ribosomal subunit protein eL39 (51 aa).

The segment at 1–22 (MAAQKSFRIKQKMAKAKKQNRP) is disordered. A compositionally biased stretch (basic residues) spans 7–20 (FRIKQKMAKAKKQN).

The protein belongs to the eukaryotic ribosomal protein eL39 family. As to quaternary structure, component of the large ribosomal subunit (LSU). Mature yeast ribosomes consist of a small (40S) and a large (60S) subunit. The 40S small subunit contains 1 molecule of ribosomal RNA (18S rRNA) and 33 different proteins (encoded by 57 genes). The large 60S subunit contains 3 rRNA molecules (25S, 5.8S and 5S rRNA) and 46 different proteins (encoded by 81 genes). eL39 interacts with YIH1.

The protein localises to the cytoplasm. Its function is as follows. Component of the ribosome, a large ribonucleoprotein complex responsible for the synthesis of proteins in the cell. The small ribosomal subunit (SSU) binds messenger RNAs (mRNAs) and translates the encoded message by selecting cognate aminoacyl-transfer RNA (tRNA) molecules. The large subunit (LSU) contains the ribosomal catalytic site termed the peptidyl transferase center (PTC), which catalyzes the formation of peptide bonds, thereby polymerizing the amino acids delivered by tRNAs into a polypeptide chain. The nascent polypeptides leave the ribosome through a tunnel in the LSU and interact with protein factors that function in enzymatic processing, targeting, and the membrane insertion of nascent chains at the exit of the ribosomal tunnel. This chain is Large ribosomal subunit protein eL39, found in Saccharomyces cerevisiae (strain ATCC 204508 / S288c) (Baker's yeast).